The chain runs to 170 residues: Small ribosomal subunit protein uS5 (170 aa).

The region spanning 16–79 is the S5 DRBM domain; that stretch reads IEDQLVAINR…EAGKKNMISV (64 aa).

The protein belongs to the universal ribosomal protein uS5 family. As to quaternary structure, part of the 30S ribosomal subunit. Contacts proteins S4 and S8.

In terms of biological role, with S4 and S12 plays an important role in translational accuracy. Located at the back of the 30S subunit body where it stabilizes the conformation of the head with respect to the body. This is Small ribosomal subunit protein uS5 from Lactobacillus delbrueckii subsp. bulgaricus (strain ATCC 11842 / DSM 20081 / BCRC 10696 / JCM 1002 / NBRC 13953 / NCIMB 11778 / NCTC 12712 / WDCM 00102 / Lb 14).